Consider the following 297-residue polypeptide: Nucleotide-binding protein BTH_I0482 (297 aa).

8–15 (GISGSGKS) is an ATP binding site. A GTP-binding site is contributed by 57-60 (DARS).

Belongs to the RapZ-like family.

Functionally, displays ATPase and GTPase activities. The protein is Nucleotide-binding protein BTH_I0482 of Burkholderia thailandensis (strain ATCC 700388 / DSM 13276 / CCUG 48851 / CIP 106301 / E264).